Reading from the N-terminus, the 162-residue chain is Nucleotide-binding protein CMM_2802 (162 aa).

The protein belongs to the YajQ family.

Functionally, nucleotide-binding protein. The polypeptide is Nucleotide-binding protein CMM_2802 (Clavibacter michiganensis subsp. michiganensis (strain NCPPB 382)).